Consider the following 327-residue polypeptide: Clavesin-2 (327 aa).

The CRAL-TRIO domain occupies 96 to 257 (IKQALKDGFP…EFGGMLPPYD (162 aa)). The segment at 289–327 (DKELSPKSMKRSQSVVDPTALKRMDKSEEENMQPLLALD) is disordered.

As to quaternary structure, forms a complex with clathrin heavy chain and gamma-adaptin.

It is found in the golgi apparatus. It localises to the trans-Golgi network membrane. The protein localises to the early endosome membrane. Its subcellular location is the cytoplasmic vesicle. The protein resides in the clathrin-coated vesicle. Required for normal morphology of late endosomes and/or lysosomes in neurons. Binds phosphatidylinositol 3,5-bisphosphate (PtdIns(3,5)P2). The chain is Clavesin-2 (Clvs2) from Mus musculus (Mouse).